Reading from the N-terminus, the 480-residue chain is Alpha-glucosidase (480 aa).

4–70 lines the NAD(+) pocket; it reads VKIGIIGAGS…ADLKFEKTTS (67 aa). Positions 119 and 153 each coordinate substrate. Residue cysteine 174 participates in Mn(2+) binding. Catalysis depends on histidine 175, which acts as the Proton donor. Histidine 203 serves as a coordination point for Mn(2+). The active-site Proton acceptor is aspartate 260.

This sequence belongs to the glycosyl hydrolase 4 family. In terms of assembly, homodimer. It depends on NAD(+) as a cofactor. The cofactor is Mn(2+).

It catalyses the reaction Hydrolysis of terminal, non-reducing (1-&gt;4)-linked alpha-D-glucose residues with release of alpha-D-glucose.. Its activity is regulated as follows. Inhibited by EDTA in vitro. Is able to hydrolyze diverse types of alpha-glycoside bonds in di- and trisaccharides: alpha-1,4 bonds of maltose and maltotriose, alpha-1,1 bonds of trehalose, alpha-1,2 bonds of sucrose, alpha-1,3 bonds of turanose and melizitose, alpha-1,6 bonds of isomaltose and melibiose. AglA is not specific with respect to the configuration at the C-4 position of its substrates because it also possesses alpha-galactosidase activity. Acts on the substrate from the non-reducing end of the chain. The activity of AglA drops with increasing length of the saccharide chain. Does not hydrolyze alpha-, beta-, and gamma-cyclodextrins or polysaccharides (starch, pullulan, amylose, amylopectin, glycogen). Does not cleave beta-glycosidic bonds in di-, oligo-, or polysaccharides. This chain is Alpha-glucosidase (aglA), found in Thermotoga neapolitana.